The chain runs to 475 residues: MNTALAQQIANEGGVEAWMIAQQHKSLLRFLTCGSVDDGKSTLIGRLLHDTRQIYEDQLSSLHNDSKRHGTQGEKLDLALLVDGLQAEREQGITIDVAYRYFSTEKRKFIIADTPGHEQYTRNMATGASTCELAILLIDARKGVLDQTRRHSFISTLLGIKHLVVAINKMDLVDYSEETFTRIREDYLTFAGQLPGNLDIRFVPLSALEGDNVASQSESMPWYSGPTLLEVLETVEIQRVVDAQPMRFPVQYVNRPNLDFRGYAGTLASGRVEVGQRVKVLPSGVESNVARIVTFDGDREEAFAGEAITLVLTDEIDISRGDLLLAADEALPAVQSASVDVVWMAEQPLSPGQSYDIKIAGKKTRARVDGIHYQVDINNLTQREVENLPLNGIGLVDLTFDEPLVLDRYQQNPVTGGLIFIDRLSNVTVGAGMVHEPVSQATAAPSEFSAFELELNALVRRHFPHWGARDLLGDK.

Residues 25-239 enclose the tr-type G domain; the sequence is KSLLRFLTCG…EVLETVEIQR (215 aa). The segment at 34 to 41 is G1; it reads GSVDDGKS. 34 to 41 is a binding site for GTP; that stretch reads GSVDDGKS. The interval 92-96 is G2; that stretch reads GITID. Residues 113–116 form a G3 region; that stretch reads DTPG. GTP-binding positions include 113–117 and 168–171; these read DTPGH and NKMD. Positions 168-171 are G4; it reads NKMD. The G5 stretch occupies residues 206–208; sequence SAL.

It belongs to the TRAFAC class translation factor GTPase superfamily. Classic translation factor GTPase family. CysN/NodQ subfamily. In terms of assembly, heterodimer composed of CysD, the smaller subunit, and CysN.

The enzyme catalyses sulfate + ATP + H(+) = adenosine 5'-phosphosulfate + diphosphate. It functions in the pathway sulfur metabolism; hydrogen sulfide biosynthesis; sulfite from sulfate: step 1/3. Its function is as follows. With CysD forms the ATP sulfurylase (ATPS) that catalyzes the adenylation of sulfate producing adenosine 5'-phosphosulfate (APS) and diphosphate, the first enzymatic step in sulfur assimilation pathway. APS synthesis involves the formation of a high-energy phosphoric-sulfuric acid anhydride bond driven by GTP hydrolysis by CysN coupled to ATP hydrolysis by CysD. The chain is Sulfate adenylyltransferase subunit 1 from Escherichia coli (strain UTI89 / UPEC).